Here is a 248-residue protein sequence, read N- to C-terminus: MYQNNLIDFNPYSCLSAVEVGKHLYWKIGSLQLHGQVFIVSWLVIAALLTISFLGTRNLQRIPEKFQNFMEFILEFLQDIAKNQIGEHEYRPWVPYIATLFLFILGCNWAGALIPWKLIHLPEGELAAPTNDINTTVALSLLTSLAYFYAGLSKKGLGYFARYVQPTPVLLPINILEDFTKPLSLSFRLFGNVLADELVVSVFTLLIPILIPLPVMILGLFASSIQALIFSTLSAAYIGEAMEGHGEE.

Helical transmembrane passes span 35-55 (GQVF…SFLG), 94-114 (VPYI…GALI), 133-153 (INTT…AGLS), 202-222 (VFTL…GLFA), and 224-244 (SIQA…AMEG).

The protein belongs to the ATPase A chain family. In terms of assembly, F-type ATPases have 2 components, CF(1) - the catalytic core - and CF(0) - the membrane proton channel. CF(1) has five subunits: alpha(3), beta(3), gamma(1), delta(1), epsilon(1). CF(0) has four main subunits: a, b, b' and c.

The protein resides in the plastid. It localises to the chloroplast thylakoid membrane. Functionally, key component of the proton channel; it plays a direct role in the translocation of protons across the membrane. This chain is ATP synthase subunit a, chloroplastic, found in Porphyra purpurea (Red seaweed).